Reading from the N-terminus, the 605-residue chain is Insulin-like growth factor-binding protein complex acid labile subunit (605 aa).

A signal peptide spans 1-27 (MALRKGGLALALLLLSWVALGPRSLEG). One can recognise an LRRNT domain in the interval 32–74 (TPGEAEGPACPATCACSYDDEVNELSVFCSSRNLTRLPDGIPG). Cystine bridges form between C41/C47 and C45/C60. N-linked (GlcNAc...) asparagine glycosylation is found at N64, N85, and N96. 19 LRR repeats span residues 75 to 96 (GTQALWLDSNNLSSIPPAAFRN), 99 to 120 (SLAFLNLQGGQLGSLEPQALLG), 123 to 144 (NLCHLHLERNQLRSLAVGTFAY), 147 to 168 (ALALLGLSNNRLSRLEDGLFEG), 171 to 192 (NLWDLNLGWNSLAVLPDAAFRG), 195 to 216 (GLRELVLAGNRLAYLQPALFSG), 219 to 240 (ELRELDLSRNALRAIKANVFAQ), 243 to 264 (RLQKLYLDRNLIAAVAPGAFLG), 267 to 288 (ALRWLDLSHNRVAGLLEDTFPG), 291 to 312 (GLRVLRLSHNAIASLRPRTFED), 315 to 336 (FLEELQLGHNRIRQLAERSFEG), 339 to 360 (QLEVLTLDHNQLQEVKVGAFLG), 363 to 384 (NVAVMNLSGNCLRNLPEQVFRG), 387 to 408 (KLHSLHLEGSCLGRIRPHTFAG), 411 to 432 (GLRRLFLKDNGLVGIEEQSLWG), 435 to 456 (ELLELDLTSNQLTHLPHQLFQG), 459 to 480 (KLEYLLLSHNRLAELPADALGP), 483 to 504 (RAFWLDVSHNRLEALPGSLLAS), and 507 to 528 (RLRYLNLRNNSLRTFTPQPPGL). N368 carries N-linked (GlcNAc...) asparagine glycosylation. N515 is a glycosylation site (N-linked (GlcNAc...) asparagine). The LRRCT domain occupies 536-605 (NPWDCSCPLK…DLGEAHFAPC (70 aa)). 3 cysteine pairs are disulfide-bonded: C540/C583, C542/C605, and C566/C571. N-linked (GlcNAc...) asparagine glycosylation occurs at N580.

As to quaternary structure, forms a ternary complex with IGF1 and IGFBP3.

Its subcellular location is the secreted. The protein resides in the extracellular space. Involved in protein-protein interactions that result in protein complexes, receptor-ligand binding or cell adhesion. This chain is Insulin-like growth factor-binding protein complex acid labile subunit (IGFALS), found in Papio hamadryas (Hamadryas baboon).